The chain runs to 786 residues: LPS-assembly protein LptD (786 aa).

The first 39 residues, 1–39 (MPPKPLFPNVFPGDGAPRKRRLALALLAVPGLVPAVSYA), serve as a signal peptide directing secretion. Residues 767-786 (PGYTPLPPPPPPMSRFSNYE) are disordered. Positions 770 to 779 (TPLPPPPPPM) are enriched in pro residues.

Belongs to the LptD family. In terms of assembly, component of the lipopolysaccharide transport and assembly complex. Interacts with LptE and LptA.

The protein resides in the cell outer membrane. In terms of biological role, together with LptE, is involved in the assembly of lipopolysaccharide (LPS) at the surface of the outer membrane. The protein is LPS-assembly protein LptD of Burkholderia lata (strain ATCC 17760 / DSM 23089 / LMG 22485 / NCIMB 9086 / R18194 / 383).